We begin with the raw amino-acid sequence, 187 residues long: Interferon alpha-1/2 (187 aa).

An N-terminal signal peptide occupies residues 1–23 (MALPCSFSVALVLLSCHSLCCLA). 2 disulfide bridges follow: cysteine 24–cysteine 122 and cysteine 52–cysteine 160. An N-linked (GlcNAc...) asparagine glycan is attached at asparagine 101.

This sequence belongs to the alpha/beta interferon family.

It localises to the secreted. Functionally, produced by macrophages, IFN-alpha have antiviral activities. Interferon stimulates the production of two enzymes: a protein kinase and an oligoadenylate synthetase. This is Interferon alpha-1/2 from Canis lupus familiaris (Dog).